Reading from the N-terminus, the 260-residue chain is Homeobox protein Hox-D11b (260 aa).

Positions 1–14 (MFSSSFSYPSKTSP) are enriched in low complexity. Disordered regions lie at residues 1 to 21 (MFSS…PFLA) and 151 to 206 (ITPG…CTRR). Basic and acidic residues predominate over residues 167 to 179 (RSPDGESSEERAG). A DNA-binding region (homeobox; truncated) is located at residues 205-260 (RRKKRCPYSKQQIIELEREFLFNIYINKDRRMQLSHLLRLTDRCVNNPLNQDSFFT).

The protein belongs to the Abd-B homeobox family.

The protein localises to the nucleus. Functionally, sequence-specific transcription factor which is part of a developmental regulatory system that provides cells with specific positional identities on the anterior-posterior axis. The sequence is that of Homeobox protein Hox-D11b (hoxd11b) from Takifugu rubripes (Japanese pufferfish).